A 179-amino-acid chain; its full sequence is Cell division protein ZapC (179 aa).

This sequence belongs to the ZapC family. As to quaternary structure, interacts directly with FtsZ.

It localises to the cytoplasm. Contributes to the efficiency of the cell division process by stabilizing the polymeric form of the cell division protein FtsZ. Acts by promoting interactions between FtsZ protofilaments and suppressing the GTPase activity of FtsZ. This Photobacterium profundum (strain SS9) protein is Cell division protein ZapC.